A 211-amino-acid chain; its full sequence is ATP-dependent Clp protease proteolytic subunit 1 (211 aa).

Serine 107 serves as the catalytic Nucleophile. Histidine 132 is a catalytic residue.

Belongs to the peptidase S14 family. In terms of assembly, fourteen ClpP subunits assemble into 2 heptameric rings which stack back to back to give a disk-like structure with a central cavity, resembling the structure of eukaryotic proteasomes.

The protein localises to the cytoplasm. The enzyme catalyses Hydrolysis of proteins to small peptides in the presence of ATP and magnesium. alpha-casein is the usual test substrate. In the absence of ATP, only oligopeptides shorter than five residues are hydrolyzed (such as succinyl-Leu-Tyr-|-NHMec, and Leu-Tyr-Leu-|-Tyr-Trp, in which cleavage of the -Tyr-|-Leu- and -Tyr-|-Trp bonds also occurs).. Cleaves peptides in various proteins in a process that requires ATP hydrolysis. Has a chymotrypsin-like activity. Plays a major role in the degradation of misfolded proteins. The protein is ATP-dependent Clp protease proteolytic subunit 1 of Mycolicibacterium paratuberculosis (strain ATCC BAA-968 / K-10) (Mycobacterium paratuberculosis).